We begin with the raw amino-acid sequence, 465 residues long: E3 ubiquitin-protein ligase TRIM15 (465 aa).

The segment at 16–61 (CTLCVGPLEDAVTAPCGHTFCRLCLPTLSQMGAQSSGKILLCPLCQ) adopts an RING-type zinc-finger fold. Residues 78-119 (LGETYCEEHGEKIYFFCENDAEFLCVFCREGPTHQAHTVGFL) form a B box-type zinc finger. Positions 83, 86, 105, and 111 each coordinate Zn(2+). Positions 126 to 229 (YRDRLRSRLE…VKELEEKCQQ (104 aa)) form a coiled coil. Positions 276–465 (EMMRMFSENL…KKGSCLTLKG (190 aa)) constitute a B30.2/SPRY domain.

Belongs to the TRIM/RBCC family. As to quaternary structure, interacts with paxillin/PXN; this interaction recruits TRIM15 to focal adhesions. Interacts with TRIM8; this interaction prevents TRIM8 cytoplasmic translocation.

The protein resides in the cytoplasm. It localises to the nucleus. Its subcellular location is the cell junction. It is found in the focal adhesion. It carries out the reaction S-ubiquitinyl-[E2 ubiquitin-conjugating enzyme]-L-cysteine + [acceptor protein]-L-lysine = [E2 ubiquitin-conjugating enzyme]-L-cysteine + N(6)-ubiquitinyl-[acceptor protein]-L-lysine.. Functionally, E3 ubiquitin ligase that plays a role in several processes including innate antiviral immnity, cell migration and chemotaxis. Acts as a 'Lys-63'-specific ubiquitin ligase for MAPK1/ERK2 and MAPK3/ERK1, promoting their activation by facilitating their interaction with MAP2K1 and MAP2K2. Also plays a role in cell migration and chemotaxis by acting as a stable focal adhesion component upon recruitment by multi-adapter protein paxillin/PXN. Functions in the RIGI-mediated interferon induction pathway upstream or at the level of MAVS. Inhibits NF-kappa-B activation by turnover of 'Lys-63'-linked ubiquitination of MAP3K7/TAK1. Mechanistically, prevents TRIM8 cytoplasmic translocation and thus inhibits TRIM8-mediated 'Lys-63'-linked polyubiquitination of MAP3K7/TAK1 in the cytoplasm. Also has an important regulatory effect on the activation of hepatic stellate cells (HSCs). This is E3 ubiquitin-protein ligase TRIM15 (TRIM15) from Macaca mulatta (Rhesus macaque).